The following is a 408-amino-acid chain: Multifunctional CCA protein (408 aa).

Residues Gly8 and Arg11 each coordinate ATP. CTP contacts are provided by Gly8 and Arg11. Mg(2+) contacts are provided by Asp21 and Asp23. 3 residues coordinate ATP: Arg91, Arg137, and Arg140. CTP contacts are provided by Arg91, Arg137, and Arg140. One can recognise an HD domain in the interval 228 to 329 (TGVHVLSVLE…LELLQSFDVY (102 aa)).

It belongs to the tRNA nucleotidyltransferase/poly(A) polymerase family. Bacterial CCA-adding enzyme type 1 subfamily. As to quaternary structure, monomer. Can also form homodimers and oligomers. The cofactor is Mg(2+). It depends on Ni(2+) as a cofactor.

It carries out the reaction a tRNA precursor + 2 CTP + ATP = a tRNA with a 3' CCA end + 3 diphosphate. The catalysed reaction is a tRNA with a 3' CCA end + 2 CTP + ATP = a tRNA with a 3' CCACCA end + 3 diphosphate. Its function is as follows. Catalyzes the addition and repair of the essential 3'-terminal CCA sequence in tRNAs without using a nucleic acid template. Adds these three nucleotides in the order of C, C, and A to the tRNA nucleotide-73, using CTP and ATP as substrates and producing inorganic pyrophosphate. tRNA 3'-terminal CCA addition is required both for tRNA processing and repair. Also involved in tRNA surveillance by mediating tandem CCA addition to generate a CCACCA at the 3' terminus of unstable tRNAs. While stable tRNAs receive only 3'-terminal CCA, unstable tRNAs are marked with CCACCA and rapidly degraded. The sequence is that of Multifunctional CCA protein from Pseudomonas syringae pv. syringae (strain B728a).